The following is a 569-amino-acid chain: Methionine--tRNA ligase (569 aa).

The short motif at 11-21 (PYINGIKHLGN) is the 'HIGH' region element. Cysteine 143, cysteine 146, cysteine 156, and cysteine 159 together coordinate Zn(2+). Residues 342 to 346 (KFSTS) carry the 'KMSKS' region motif. Threonine 345 lines the ATP pocket.

The protein belongs to the class-I aminoacyl-tRNA synthetase family. MetG type 1 subfamily. Monomer. The cofactor is Zn(2+).

It localises to the cytoplasm. The enzyme catalyses tRNA(Met) + L-methionine + ATP = L-methionyl-tRNA(Met) + AMP + diphosphate. In terms of biological role, is required not only for elongation of protein synthesis but also for the initiation of all mRNA translation through initiator tRNA(fMet) aminoacylation. This chain is Methionine--tRNA ligase, found in Caulobacter vibrioides (strain ATCC 19089 / CIP 103742 / CB 15) (Caulobacter crescentus).